The chain runs to 54 residues: Rubredoxin (54 aa).

The Rubredoxin-like domain maps to 1–54; it reads MKKYQCIVCGWIYDEAEGWPQDGIAPGTKWEDIPDDWTCPDCGVSKVDFEMIEV. 4 residues coordinate Fe cation: cysteine 6, cysteine 9, cysteine 39, and cysteine 42.

This sequence belongs to the rubredoxin family. It depends on Fe(3+) as a cofactor.

It localises to the cytoplasm. It functions in the pathway hydrocarbon metabolism; alkane degradation. In terms of biological role, involved in the hydrocarbon hydroxylating system, which transfers electrons from NADH to rubredoxin reductase and then through rubredoxin to alkane 1 monooxygenase. The sequence is that of Rubredoxin (rubA) from Acinetobacter baylyi (strain ATCC 33305 / BD413 / ADP1).